Here is a 157-residue protein sequence, read N- to C-terminus: Putative pre-16S rRNA nuclease (157 aa).

Belongs to the YqgF nuclease family.

It localises to the cytoplasm. Functionally, could be a nuclease involved in processing of the 5'-end of pre-16S rRNA. In Nitrosomonas eutropha (strain DSM 101675 / C91 / Nm57), this protein is Putative pre-16S rRNA nuclease.